The chain runs to 309 residues: ADP,ATP carrier protein 1 (309 aa).

Solcar repeat units lie at residues 11-104 (SHFG…IKSL), 116-208 (KWFA…FKPV), and 216-302 (GSFV…LQLI). The next 5 helical transmembrane spans lie at 13–40 (FGVDFLMGGVSAAIAKTGAAPIERVKLL), 81–105 (TANVLRYFPTQALNFAFKDKIKSLL), 114–134 (YAKWFAGNLFSGGAAGGLSLL), 184–205 (FVPSVLGIIVYRGLYFGLYDSF), and 219–239 (VASFLLGWVITMGASTASYPL). Arg-86 and Lys-98 together coordinate ADP. ADP is bound at residue Arg-243. The tract at residues 243–248 (RRRMMM) is important for transport activity. The short motif at 243–248 (RRRMMM) is the Nucleotide carrier signature motif element. Residues 279-299 (CGANIFRGVAAAGVISLYDQL) form a helical membrane-spanning segment.

It belongs to the mitochondrial carrier (TC 2.A.29) family. As to quaternary structure, monomer.

It localises to the mitochondrion inner membrane. It carries out the reaction ADP(in) + ATP(out) = ADP(out) + ATP(in). With respect to regulation, the matrix-open state (m-state) is inhibited by the membrane-permeable bongkrekic acid (BKA). The cytoplasmic-open state (c-state) is inhibited by the membrane-impermeable toxic inhibitor carboxyatractyloside (CATR). Functionally, ADP:ATP antiporter that mediates import of ADP into the mitochondrial matrix for ATP synthesis, and export of ATP out to fuel the cell. Cycles between the cytoplasmic-open state (c-state) and the matrix-open state (m-state): operates by the alternating access mechanism with a single substrate-binding site intermittently exposed to either the cytosolic (c-state) or matrix (m-state) side of the inner mitochondrial membrane. The chain is ADP,ATP carrier protein 1 (AAC1) from Saccharomyces cerevisiae (strain ATCC 204508 / S288c) (Baker's yeast).